The chain runs to 387 residues: Succinyl-diaminopimelate desuccinylase (387 aa).

His-74 is a Zn(2+) binding site. Asp-76 is a catalytic residue. Asp-107 serves as a coordination point for Zn(2+). Glu-142 serves as the catalytic Proton acceptor. Positions 143, 171, and 360 each coordinate Zn(2+).

It belongs to the peptidase M20A family. DapE subfamily. As to quaternary structure, homodimer. Requires Zn(2+) as cofactor. The cofactor is Co(2+).

The enzyme catalyses N-succinyl-(2S,6S)-2,6-diaminopimelate + H2O = (2S,6S)-2,6-diaminopimelate + succinate. The protein operates within amino-acid biosynthesis; L-lysine biosynthesis via DAP pathway; LL-2,6-diaminopimelate from (S)-tetrahydrodipicolinate (succinylase route): step 3/3. Functionally, catalyzes the hydrolysis of N-succinyl-L,L-diaminopimelic acid (SDAP), forming succinate and LL-2,6-diaminopimelate (DAP), an intermediate involved in the bacterial biosynthesis of lysine and meso-diaminopimelic acid, an essential component of bacterial cell walls. The protein is Succinyl-diaminopimelate desuccinylase of Rhodopseudomonas palustris (strain BisA53).